Here is a 526-residue protein sequence, read N- to C-terminus: ATP synthase subunit alpha (526 aa).

171–178 (GDRQTGKT) is an ATP binding site.

Belongs to the ATPase alpha/beta chains family. F-type ATPases have 2 components, CF(1) - the catalytic core - and CF(0) - the membrane proton channel. CF(1) has five subunits: alpha(3), beta(3), gamma(1), delta(1), epsilon(1). CF(0) has four main subunits: a, b, b' and c.

It is found in the cell inner membrane. It carries out the reaction ATP + H2O + 4 H(+)(in) = ADP + phosphate + 5 H(+)(out). In terms of biological role, produces ATP from ADP in the presence of a proton gradient across the membrane. The alpha chain is a regulatory subunit. This Chlorobium limicola (strain DSM 245 / NBRC 103803 / 6330) protein is ATP synthase subunit alpha.